Reading from the N-terminus, the 282-residue chain is MGQKVNPFGFRLGITTDHRSRWFADSTKTGQRYADYVKEDVAIRRLMSKGMERAGISKVEIERTRDRVRVDIHTARPGIVIGRRGAEADRIRTELEKLTGKQVQLNILEVKNPEVDAQLVAQGVAEQLASRVSFRRAMRKGMQTTMRSGAKGIRVQCAGRLGGAEMSRSEFYREGRVPLHTLRANIDYGFYEARTTFGRIGVKVWIYHGDITSRELAQSQAAAPRAPRRNERGDRPDRGARRTRPAQDTTAPVAEAVATGSAPTGTAATEPVIGKGSNGTEA.

Residues 43–111 form the KH type-2 domain; the sequence is IRRLMSKGME…QVQLNILEVK (69 aa). The segment at 217–282 is disordered; sequence AQSQAAAPRA…IGKGSNGTEA (66 aa). Residues 228 to 240 show a composition bias toward basic and acidic residues; the sequence is RRNERGDRPDRGA. Positions 256–269 are enriched in low complexity; it reads AVATGSAPTGTAAT.

The protein belongs to the universal ribosomal protein uS3 family. As to quaternary structure, part of the 30S ribosomal subunit. Forms a tight complex with proteins S10 and S14.

Its function is as follows. Binds the lower part of the 30S subunit head. Binds mRNA in the 70S ribosome, positioning it for translation. In Kineococcus radiotolerans (strain ATCC BAA-149 / DSM 14245 / SRS30216), this protein is Small ribosomal subunit protein uS3.